The primary structure comprises 481 residues: Long chain base biosynthesis protein 1b (481 aa).

Residues phenylalanine 32–phenylalanine 52 form a helical membrane-spanning segment.

The protein belongs to the class-II pyridoxal-phosphate-dependent aminotransferase family. As to quaternary structure, heterodimer with LCB2. Component of the serine palmitoyltransferase (SPT) complex, composed of LCB1 and LCB2. It depends on pyridoxal 5'-phosphate as a cofactor.

The protein localises to the endoplasmic reticulum membrane. It catalyses the reaction L-serine + hexadecanoyl-CoA + H(+) = 3-oxosphinganine + CO2 + CoA. It functions in the pathway lipid metabolism; sphingolipid metabolism. Functionally, serine palmitoyltransferase (SPT). The heterodimer formed with LCB2 constitutes the catalytic core. The protein is Long chain base biosynthesis protein 1b of Oryza sativa subsp. japonica (Rice).